The following is a 215-amino-acid chain: Pyridoxine/pyridoxamine 5'-phosphate oxidase (215 aa).

Substrate-binding positions include 9–12 (RREY) and Lys-69. FMN-binding positions include 64 to 69 (RILLLK), 79 to 80 (FT), Lys-86, and Gln-108. Substrate is bound by residues Tyr-126, Arg-130, and Ser-134. FMN-binding positions include 143 to 144 (QS) and Trp-188. 194–196 (RLH) provides a ligand contact to substrate. Arg-198 serves as a coordination point for FMN.

Belongs to the pyridoxamine 5'-phosphate oxidase family. As to quaternary structure, homodimer. The cofactor is FMN.

The catalysed reaction is pyridoxamine 5'-phosphate + O2 + H2O = pyridoxal 5'-phosphate + H2O2 + NH4(+). The enzyme catalyses pyridoxine 5'-phosphate + O2 = pyridoxal 5'-phosphate + H2O2. Its pathway is cofactor metabolism; pyridoxal 5'-phosphate salvage; pyridoxal 5'-phosphate from pyridoxamine 5'-phosphate: step 1/1. The protein operates within cofactor metabolism; pyridoxal 5'-phosphate salvage; pyridoxal 5'-phosphate from pyridoxine 5'-phosphate: step 1/1. In terms of biological role, catalyzes the oxidation of either pyridoxine 5'-phosphate (PNP) or pyridoxamine 5'-phosphate (PMP) into pyridoxal 5'-phosphate (PLP). The chain is Pyridoxine/pyridoxamine 5'-phosphate oxidase from Pseudomonas paraeruginosa (strain DSM 24068 / PA7) (Pseudomonas aeruginosa (strain PA7)).